Reading from the N-terminus, the 448-residue chain is Trigger factor (448 aa).

The 86-residue stretch at Gly172–Pro257 folds into the PPIase FKBP-type domain.

Belongs to the FKBP-type PPIase family. Tig subfamily.

Its subcellular location is the cytoplasm. The catalysed reaction is [protein]-peptidylproline (omega=180) = [protein]-peptidylproline (omega=0). Functionally, involved in protein export. Acts as a chaperone by maintaining the newly synthesized protein in an open conformation. Functions as a peptidyl-prolyl cis-trans isomerase. The protein is Trigger factor of Burkholderia multivorans (strain ATCC 17616 / 249).